A 211-amino-acid chain; its full sequence is MKWRRMPVGPIQANAYFLISDDQCLIFDPGGEGHKINQYIKEKGLTPLAILLTHAHFDHIGALDEVREKWDIPVYLHQNEKNWLADASLNGSGMLRGIEVTAKPADHLIEGDGELNIGPFHLETLFTPGHSPGSVSYYVKDADLVISGDVLFQGGIGRTDLIGGNQETLLTSIHEKLLTLPEHTLVLSGHGPETDVLTEQDQNPFLNGFSL.

His-54, His-56, Asp-58, His-59, His-130, Asp-149, and His-190 together coordinate Zn(2+).

It belongs to the metallo-beta-lactamase superfamily. Glyoxalase II family. Requires Zn(2+) as cofactor.

The chain is Probable metallo-hydrolase YqgX (yqgX) from Bacillus subtilis (strain 168).